The following is a 297-amino-acid chain: Putative S-adenosyl-L-methionine-dependent methyltransferase Mjls_1072 (297 aa).

S-adenosyl-L-methionine is bound by residues D124 and 153 to 154 (DL).

Belongs to the UPF0677 family.

Exhibits S-adenosyl-L-methionine-dependent methyltransferase activity. The polypeptide is Putative S-adenosyl-L-methionine-dependent methyltransferase Mjls_1072 (Mycobacterium sp. (strain JLS)).